The sequence spans 214 residues: dITP/XTP pyrophosphatase (214 aa).

13 to 18 contributes to the substrate binding site; it reads SHNAGK. Positions 45 and 74 each coordinate Mg(2+). Asp74 acts as the Proton acceptor in catalysis. Residues Ser75, 163-166, Lys186, and 199-200 each bind substrate; these read FGYD and HR.

Belongs to the HAM1 NTPase family. As to quaternary structure, homodimer. It depends on Mg(2+) as a cofactor.

The enzyme catalyses XTP + H2O = XMP + diphosphate + H(+). It carries out the reaction dITP + H2O = dIMP + diphosphate + H(+). It catalyses the reaction ITP + H2O = IMP + diphosphate + H(+). In terms of biological role, pyrophosphatase that catalyzes the hydrolysis of nucleoside triphosphates to their monophosphate derivatives, with a high preference for the non-canonical purine nucleotides XTP (xanthosine triphosphate), dITP (deoxyinosine triphosphate) and ITP. Seems to function as a house-cleaning enzyme that removes non-canonical purine nucleotides from the nucleotide pool, thus preventing their incorporation into DNA/RNA and avoiding chromosomal lesions. This Rhizobium meliloti (strain 1021) (Ensifer meliloti) protein is dITP/XTP pyrophosphatase.